The sequence spans 174 residues: Crossover junction endodeoxyribonuclease RuvC (174 aa).

Active-site residues include Asp8, Glu69, and Asp141. Mg(2+)-binding residues include Asp8, Glu69, and Asp141.

It belongs to the RuvC family. In terms of assembly, homodimer which binds Holliday junction (HJ) DNA. The HJ becomes 2-fold symmetrical on binding to RuvC with unstacked arms; it has a different conformation from HJ DNA in complex with RuvA. In the full resolvosome a probable DNA-RuvA(4)-RuvB(12)-RuvC(2) complex forms which resolves the HJ. Mg(2+) is required as a cofactor.

The protein localises to the cytoplasm. It catalyses the reaction Endonucleolytic cleavage at a junction such as a reciprocal single-stranded crossover between two homologous DNA duplexes (Holliday junction).. Its function is as follows. The RuvA-RuvB-RuvC complex processes Holliday junction (HJ) DNA during genetic recombination and DNA repair. Endonuclease that resolves HJ intermediates. Cleaves cruciform DNA by making single-stranded nicks across the HJ at symmetrical positions within the homologous arms, yielding a 5'-phosphate and a 3'-hydroxyl group; requires a central core of homology in the junction. The consensus cleavage sequence is 5'-(A/T)TT(C/G)-3'. Cleavage occurs on the 3'-side of the TT dinucleotide at the point of strand exchange. HJ branch migration catalyzed by RuvA-RuvB allows RuvC to scan DNA until it finds its consensus sequence, where it cleaves and resolves the cruciform DNA. In Xanthomonas oryzae pv. oryzae (strain PXO99A), this protein is Crossover junction endodeoxyribonuclease RuvC.